Consider the following 2289-residue polypeptide: Protein Ycf2 (2289 aa).

Residue 1643-1650 coordinates ATP; sequence GSIGTGRS.

Belongs to the Ycf2 family.

The protein localises to the plastid. It is found in the chloroplast stroma. Its function is as follows. Probable ATPase of unknown function. Its presence in a non-photosynthetic plant (Epifagus virginiana) and experiments in tobacco indicate that it has an essential function which is probably not related to photosynthesis. The sequence is that of Protein Ycf2 from Aethionema grandiflorum (Persian stone-cress).